We begin with the raw amino-acid sequence, 71 residues long: Small ribosomal subunit protein bS21 (71 aa).

The segment at 39–71 (EKPTQERKRKAAAAVKRQLRRSSRDVTKRQRLY) is disordered. A compositionally biased stretch (basic residues) spans 45-59 (RKRKAAAAVKRQLRR). Residues 60 to 71 (SSRDVTKRQRLY) show a composition bias toward basic and acidic residues.

Belongs to the bacterial ribosomal protein bS21 family.

This chain is Small ribosomal subunit protein bS21, found in Stenotrophomonas maltophilia (strain K279a).